The sequence spans 162 residues: Large ribosomal subunit protein uL10 (162 aa).

It belongs to the universal ribosomal protein uL10 family. As to quaternary structure, part of the ribosomal stalk of the 50S ribosomal subunit. The N-terminus interacts with L11 and the large rRNA to form the base of the stalk. The C-terminus forms an elongated spine to which L12 dimers bind in a sequential fashion forming a multimeric L10(L12)X complex.

Its function is as follows. Forms part of the ribosomal stalk, playing a central role in the interaction of the ribosome with GTP-bound translation factors. This is Large ribosomal subunit protein uL10 from Borrelia recurrentis (strain A1).